A 1528-amino-acid polypeptide reads, in one-letter code: Cell surface antigen I/II (1528 aa).

An N-terminal signal peptide occupies residues 1-50 (MLQKCKLEGIIICNEKRLLGAAKVKSGRTLSGALLGTAILASGAGQKALA). A disordered region spans residues 50-156 (AEETSTTSTS…PEIKDDYSKQ (107 aa)). Residues 51–68 (EETSTTSTSGGDTAVVGT) show a composition bias toward low complexity. 2 stretches are compositionally biased toward polar residues: residues 83 to 97 (NPSSQAETSQAQARQ) and 124 to 133 (TVSQDATVNK). The segment covering 142-154 (ANQKEPEIKDDYS) has biased composition (basic and acidic residues). 4 Ag I/II A repeats span residues 161-235 (QKAT…QQAN), 236-315 (SDSQ…QAGN), 316-396 (AANE…QSGN), and 397-478 (AANE…KKDL). Disordered regions lie at residues 840-951 (VPKV…VEPV) and 1459-1480 (SNTVRTSTPEPKQPSPVDPKTT). The span at 855-879 (TKPDEPTYEVEKELVDLPVEPKYEP) shows a compositional bias: basic and acidic residues. Residues 1459-1468 (SNTVRTSTPE) show a composition bias toward polar residues. Positions 1503-1507 (LPATG) match the LPXTG sorting signal motif. At T1506 the chain carries Pentaglycyl murein peptidoglycan amidated threonine. A propeptide spans 1507-1528 (GDSSNAYLPLLGLVSLTAGFSC) (removed by sortase).

This sequence belongs to the antigen I/II family.

It localises to the secreted. The protein resides in the cell wall. The protein is Cell surface antigen I/II of Streptococcus downei (Streptococcus sobrinus).